We begin with the raw amino-acid sequence, 188 residues long: Peptidyl-tRNA hydrolase (188 aa).

Tyr14 provides a ligand contact to tRNA. The Proton acceptor role is filled by His19. TRNA-binding residues include Tyr64, Asn66, and Asn112.

This sequence belongs to the PTH family. As to quaternary structure, monomer.

It is found in the cytoplasm. It carries out the reaction an N-acyl-L-alpha-aminoacyl-tRNA + H2O = an N-acyl-L-amino acid + a tRNA + H(+). Hydrolyzes ribosome-free peptidyl-tRNAs (with 1 or more amino acids incorporated), which drop off the ribosome during protein synthesis, or as a result of ribosome stalling. Its function is as follows. Catalyzes the release of premature peptidyl moieties from peptidyl-tRNA molecules trapped in stalled 50S ribosomal subunits, and thus maintains levels of free tRNAs and 50S ribosomes. Releases Ala-tailed nascent peptides from stalled 50S ribosomal subunits. Non-templated Ala tailing occurs as part of the ribosome quality control (RQC) pathway. In the absence of Ala tails significantly less peptide release occurs. The Ala tail facilitates the interaction of Pth with the nascent peptide-tRNA ester bond as well as promoting nascent chain degradation; 3 Ala residues suffice to stimulate peptide release from stalled 50S ribosomal subunits. Complements a temperature-sensitive pth mutation in E.coli. The sequence is that of Peptidyl-tRNA hydrolase from Bacillus subtilis (strain 168).